The sequence spans 749 residues: G-type lectin S-receptor-like serine/threonine-protein kinase At1g61460 (749 aa).

The first 25 residues, 1–25 (MRITFFASLLLFTNTIFISFSFAIA), serve as a signal peptide directing secretion. The 120-residue stretch at 26-145 (GINKESPLSI…FSGRTLWQSF (120 aa)) folds into the Bulb-type lectin domain. The Extracellular segment spans residues 26 to 392 (GINKESPLSI…ELGGNKRKKT (367 aa)). Asparagine 54, asparagine 95, asparagine 118, and asparagine 135 each carry an N-linked (GlcNAc...) asparagine glycan. An EGF-like; atypical domain is found at 247–280 (PAHSCDYYGVCGPFGICVKSVCKCFKGFIPKYIE). Cystine bridges form between cysteine 251–cysteine 263 and cysteine 257–cysteine 268. N-linked (GlcNAc...) asparagine glycans are attached at residues asparagine 286, asparagine 302, and asparagine 341. The PAN domain occupies 299 to 381 (CQENSTKKDA…GEILSIRLAR (83 aa)). Intrachain disulfides connect cysteine 334–cysteine 355 and cysteine 338–cysteine 344. Residues 393-413 (ITASIVSLSLFLILGSTAFGF) form a helical membrane-spanning segment. Residues 414–749 (WRYRVKHNAS…EMTKSVILGR (336 aa)) lie on the Cytoplasmic side of the membrane. A Protein kinase domain is found at 454–721 (FSLSNKLGQG…DLPSPKQPTF (268 aa)). ATP contacts are provided by residues 460-468 (LGQGGFGSV) and lysine 482. Residues 543 to 560 (RKRLEIDWPKRFDIIQGI) form a caM-binding region. Aspartate 579 acts as the Proton acceptor in catalysis.

Belongs to the protein kinase superfamily. Ser/Thr protein kinase family.

It localises to the cell membrane. The enzyme catalyses L-seryl-[protein] + ATP = O-phospho-L-seryl-[protein] + ADP + H(+). It carries out the reaction L-threonyl-[protein] + ATP = O-phospho-L-threonyl-[protein] + ADP + H(+). The chain is G-type lectin S-receptor-like serine/threonine-protein kinase At1g61460 from Arabidopsis thaliana (Mouse-ear cress).